We begin with the raw amino-acid sequence, 174 residues long: Cuticle protein 1 (174 aa).

The first 18 residues, methionine 1 to alanine 18, serve as a signal peptide directing secretion.

It is found in the secreted. This chain is Cuticle protein 1, found in Lonomia obliqua (Moth).